We begin with the raw amino-acid sequence, 201 residues long: Holliday junction branch migration complex subunit RuvA (201 aa).

The domain I stretch occupies residues 1–64 (MIGRLYGKII…EDAHLLFGFA (64 aa)). Positions 65-143 (QKQDRTLFRE…GIAQTDFFVE (79 aa)) are domain II. A flexible linker region spans residues 144–154 (HSHETMVATYE). The tract at residues 154-201 (EIDASEEARDALLALGYKLTDAEKMIKKVHKSGATSEQLIRDALKASL) is domain III.

Belongs to the RuvA family. Homotetramer. Forms an RuvA(8)-RuvB(12)-Holliday junction (HJ) complex. HJ DNA is sandwiched between 2 RuvA tetramers; dsDNA enters through RuvA and exits via RuvB. An RuvB hexamer assembles on each DNA strand where it exits the tetramer. Each RuvB hexamer is contacted by two RuvA subunits (via domain III) on 2 adjacent RuvB subunits; this complex drives branch migration. In the full resolvosome a probable DNA-RuvA(4)-RuvB(12)-RuvC(2) complex forms which resolves the HJ.

It is found in the cytoplasm. Its function is as follows. The RuvA-RuvB-RuvC complex processes Holliday junction (HJ) DNA during genetic recombination and DNA repair, while the RuvA-RuvB complex plays an important role in the rescue of blocked DNA replication forks via replication fork reversal (RFR). RuvA specifically binds to HJ cruciform DNA, conferring on it an open structure. The RuvB hexamer acts as an ATP-dependent pump, pulling dsDNA into and through the RuvAB complex. HJ branch migration allows RuvC to scan DNA until it finds its consensus sequence, where it cleaves and resolves the cruciform DNA. The protein is Holliday junction branch migration complex subunit RuvA of Haemophilus ducreyi (strain 35000HP / ATCC 700724).